We begin with the raw amino-acid sequence, 349 residues long: Peroxisomal acyl-coenzyme A thioester hydrolase 1 (349 aa).

Catalysis depends on charge relay system residues aspartate 259, serine 282, and glutamine 333. Residues 347 to 349 carry the Microbody targeting signal motif; it reads AKF.

The protein belongs to the C/M/P thioester hydrolase family.

Its subcellular location is the peroxisome. It carries out the reaction hexadecanoyl-CoA + H2O = hexadecanoate + CoA + H(+). Functionally, acyl-coenzyme A (acyl-CoA) thioesterases are a group of enzymes that catalyze the hydrolysis of acyl-CoAs to the free fatty acid and coenzyme A (CoASH), providing the potential to regulate intracellular levels of acyl-CoAs, free fatty acids and CoASH. Contributes to growth on fatty acids. In Saccharomyces cerevisiae (strain ATCC 204508 / S288c) (Baker's yeast), this protein is Peroxisomal acyl-coenzyme A thioester hydrolase 1 (TES1).